The chain runs to 236 residues: tRNA1(Val) (adenine(37)-N6)-methyltransferase (236 aa).

It belongs to the methyltransferase superfamily. tRNA (adenine-N(6)-)-methyltransferase family.

It is found in the cytoplasm. It catalyses the reaction adenosine(37) in tRNA1(Val) + S-adenosyl-L-methionine = N(6)-methyladenosine(37) in tRNA1(Val) + S-adenosyl-L-homocysteine + H(+). In terms of biological role, specifically methylates the adenine in position 37 of tRNA(1)(Val) (anticodon cmo5UAC). The chain is tRNA1(Val) (adenine(37)-N6)-methyltransferase from Actinobacillus pleuropneumoniae serotype 7 (strain AP76).